The sequence spans 130 residues: Small ribosomal subunit protein uS9 (130 aa).

It belongs to the universal ribosomal protein uS9 family.

The chain is Small ribosomal subunit protein uS9 from Blochmanniella floridana.